We begin with the raw amino-acid sequence, 179 residues long: Peptidyl-tRNA hydrolase 2, mitochondrial (179 aa).

Residues 10 to 32 traverse the membrane as a helical segment; that stretch reads YLTNPGALSLAAGVACGVCLGWG. Residues Lys76, Lys81, Lys95, Lys106, Lys115, Lys171, and Lys177 each participate in a glycyl lysine isopeptide (Lys-Gly) (interchain with G-Cter in ubiquitin) cross-link.

This sequence belongs to the PTH2 family. Monomer. In terms of processing, ubiquitinated by PRKN during mitophagy, leading to its degradation and enhancement of mitophagy. Deubiquitinated by USP30.

It localises to the mitochondrion outer membrane. The catalysed reaction is an N-acyl-L-alpha-aminoacyl-tRNA + H2O = an N-acyl-L-amino acid + a tRNA + H(+). In terms of biological role, peptidyl-tRNA hydrolase which releases tRNAs from the ribosome during protein synthesis. Promotes caspase-independent apoptosis by regulating the function of two transcriptional regulators, AES and TLE1. In Bos taurus (Bovine), this protein is Peptidyl-tRNA hydrolase 2, mitochondrial (PTRH2).